The sequence spans 204 residues: Peptidyl-tRNA hydrolase (204 aa).

Tyrosine 14 contributes to the tRNA binding site. Histidine 19 serves as the catalytic Proton acceptor. 3 residues coordinate tRNA: phenylalanine 64, asparagine 66, and asparagine 112.

It belongs to the PTH family. Monomer.

The protein localises to the cytoplasm. It carries out the reaction an N-acyl-L-alpha-aminoacyl-tRNA + H2O = an N-acyl-L-amino acid + a tRNA + H(+). Functionally, hydrolyzes ribosome-free peptidyl-tRNAs (with 1 or more amino acids incorporated), which drop off the ribosome during protein synthesis, or as a result of ribosome stalling. Its function is as follows. Catalyzes the release of premature peptidyl moieties from peptidyl-tRNA molecules trapped in stalled 50S ribosomal subunits, and thus maintains levels of free tRNAs and 50S ribosomes. The polypeptide is Peptidyl-tRNA hydrolase (Azorhizobium caulinodans (strain ATCC 43989 / DSM 5975 / JCM 20966 / LMG 6465 / NBRC 14845 / NCIMB 13405 / ORS 571)).